The following is a 466-amino-acid chain: Oryzain beta chain (466 aa).

Positions 1 to 21 (MAARAAAAAFLLLLIVGAATA) are cleaved as a signal peptide. Residues 22–140 (APDMSIISYN…ERYRHDGVEE (119 aa)) constitute a propeptide, activation peptide. 3 cysteine pairs are disulfide-bonded: Cys162-Cys205, Cys196-Cys238, and Cys296-Cys347. The active site involves Cys165. Active-site residues include His302 and Asn322. Asn341 is a glycosylation site (N-linked (GlcNAc...) asparagine). Residues 358–380 (KSGANPPKPSPTPPTPPTPPPPS) are disordered. Residues 362–466 (NPPKPSPTPP…KRTLAKLNTA (105 aa)) constitute a propeptide, removed in mature form. The span at 363–380 (PPKPSPTPPTPPTPPPPS) shows a compositional bias: pro residues. Disulfide bonds link Cys386–Cys398 and Cys392–Cys413. Residue Asn389 is glycosylated (N-linked (GlcNAc...) asparagine).

It belongs to the peptidase C1 family. Expressed only in seeds.

Its function is as follows. Probable thiol protease. This is Oryzain beta chain from Oryza sativa subsp. japonica (Rice).